Consider the following 361-residue polypeptide: Anthranilate phosphoribosyltransferase (361 aa).

Residues Gly80, 83 to 84, Thr88, 90 to 93, 108 to 116, and Ser120 each bind 5-phospho-alpha-D-ribose 1-diphosphate; these read GD, NVST, and KHGNYSVSS. Gly80 contacts anthranilate. Ser92 contributes to the Mg(2+) binding site. Residue Asn111 coordinates anthranilate. Arg166 is a binding site for anthranilate. 2 residues coordinate Mg(2+): Asp224 and Glu225. Residues 338–361 are disordered; that stretch reads EGDGEAASTDSAAASTTAGPEDDD. Positions 343-355 are enriched in low complexity; the sequence is AASTDSAAASTTA.

This sequence belongs to the anthranilate phosphoribosyltransferase family. Homodimer. Mg(2+) serves as cofactor.

The enzyme catalyses N-(5-phospho-beta-D-ribosyl)anthranilate + diphosphate = 5-phospho-alpha-D-ribose 1-diphosphate + anthranilate. The protein operates within amino-acid biosynthesis; L-tryptophan biosynthesis; L-tryptophan from chorismate: step 2/5. Catalyzes the transfer of the phosphoribosyl group of 5-phosphorylribose-1-pyrophosphate (PRPP) to anthranilate to yield N-(5'-phosphoribosyl)-anthranilate (PRA). This is Anthranilate phosphoribosyltransferase from Halorubrum lacusprofundi (strain ATCC 49239 / DSM 5036 / JCM 8891 / ACAM 34).